The chain runs to 277 residues: Phosphoenolpyruvate synthase regulatory protein (277 aa).

157 to 164 (GVSRCGKT) is an ADP binding site.

Belongs to the pyruvate, phosphate/water dikinase regulatory protein family. PSRP subfamily.

It carries out the reaction [pyruvate, water dikinase] + ADP = [pyruvate, water dikinase]-phosphate + AMP + H(+). The enzyme catalyses [pyruvate, water dikinase]-phosphate + phosphate + H(+) = [pyruvate, water dikinase] + diphosphate. Its function is as follows. Bifunctional serine/threonine kinase and phosphorylase involved in the regulation of the phosphoenolpyruvate synthase (PEPS) by catalyzing its phosphorylation/dephosphorylation. The protein is Phosphoenolpyruvate synthase regulatory protein of Escherichia coli O6:K15:H31 (strain 536 / UPEC).